We begin with the raw amino-acid sequence, 190 residues long: Imidazoleglycerol-phosphate dehydratase (190 aa).

Belongs to the imidazoleglycerol-phosphate dehydratase family.

It localises to the cytoplasm. The enzyme catalyses D-erythro-1-(imidazol-4-yl)glycerol 3-phosphate = 3-(imidazol-4-yl)-2-oxopropyl phosphate + H2O. It participates in amino-acid biosynthesis; L-histidine biosynthesis; L-histidine from 5-phospho-alpha-D-ribose 1-diphosphate: step 6/9. This chain is Imidazoleglycerol-phosphate dehydratase, found in Wolinella succinogenes (strain ATCC 29543 / DSM 1740 / CCUG 13145 / JCM 31913 / LMG 7466 / NCTC 11488 / FDC 602W) (Vibrio succinogenes).